A 214-amino-acid polypeptide reads, in one-letter code: Probable transaldolase (214 aa).

Residue lysine 83 is the Schiff-base intermediate with substrate of the active site.

Belongs to the transaldolase family. Type 3B subfamily.

It is found in the cytoplasm. The catalysed reaction is D-sedoheptulose 7-phosphate + D-glyceraldehyde 3-phosphate = D-erythrose 4-phosphate + beta-D-fructose 6-phosphate. The protein operates within carbohydrate degradation; pentose phosphate pathway; D-glyceraldehyde 3-phosphate and beta-D-fructose 6-phosphate from D-ribose 5-phosphate and D-xylulose 5-phosphate (non-oxidative stage): step 2/3. Transaldolase is important for the balance of metabolites in the pentose-phosphate pathway. The polypeptide is Probable transaldolase (Streptococcus equi subsp. zooepidemicus (strain H70)).